The primary structure comprises 517 residues: Maturase K (517 aa).

It belongs to the intron maturase 2 family. MatK subfamily.

Its subcellular location is the plastid. It localises to the chloroplast. In terms of biological role, usually encoded in the trnK tRNA gene intron. Probably assists in splicing its own and other chloroplast group II introns. This is Maturase K from Phalaenopsis japonica (Orchid).